A 260-amino-acid polypeptide reads, in one-letter code: Hydroxyethylthiazole kinase 2 (260 aa).

A substrate-binding site is contributed by M40. Positions 116 and 161 each coordinate ATP. A188 contacts substrate.

Belongs to the Thz kinase family. It depends on Mg(2+) as a cofactor.

The enzyme catalyses 5-(2-hydroxyethyl)-4-methylthiazole + ATP = 4-methyl-5-(2-phosphooxyethyl)-thiazole + ADP + H(+). It participates in cofactor biosynthesis; thiamine diphosphate biosynthesis; 4-methyl-5-(2-phosphoethyl)-thiazole from 5-(2-hydroxyethyl)-4-methylthiazole: step 1/1. Catalyzes the phosphorylation of the hydroxyl group of 4-methyl-5-beta-hydroxyethylthiazole (THZ). The chain is Hydroxyethylthiazole kinase 2 from Oceanobacillus iheyensis (strain DSM 14371 / CIP 107618 / JCM 11309 / KCTC 3954 / HTE831).